Consider the following 79-residue polypeptide: MSEISVTQTLDTLGLRCPEPVMLVRKNIRHLNDGEILLIIADDPATTRDIPSFCQFMDHTLLQCEVEKPPFKYWVKRGK.

The Cysteine persulfide intermediate role is filled by C17.

The protein belongs to the sulfur carrier protein TusA family.

The protein resides in the cytoplasm. Sulfur carrier protein which probably makes part of a sulfur-relay system. The polypeptide is Sulfur carrier protein TusA (Haemophilus influenzae (strain ATCC 51907 / DSM 11121 / KW20 / Rd)).